The sequence spans 137 residues: Holo-[acyl-carrier-protein] synthase (137 aa).

Mg(2+)-binding residues include Asp8 and Glu58.

This sequence belongs to the P-Pant transferase superfamily. AcpS family. It depends on Mg(2+) as a cofactor.

The protein localises to the cytoplasm. The catalysed reaction is apo-[ACP] + CoA = holo-[ACP] + adenosine 3',5'-bisphosphate + H(+). Its function is as follows. Transfers the 4'-phosphopantetheine moiety from coenzyme A to a Ser of acyl-carrier-protein. The chain is Holo-[acyl-carrier-protein] synthase from Lactobacillus delbrueckii subsp. bulgaricus (strain ATCC BAA-365 / Lb-18).